We begin with the raw amino-acid sequence, 686 residues long: MDQAASPDDHARYLALRAEVARHNRAYYEQDAPEISDDEYDALARALRDMEARHPEWVEDDSPVQTIGGAPSAAFEPVAHLTPMTSLDNVFDADELREWQEKLARSLNLPPESDDFTFTGEIKIDGLSVNLYYLDGTLQWAATRGNGRVGEMVTAQVLTIPGIPQHLDGLKGQLEVRGEVYLSRADFAAFNAQAEELGTPLLKNPRNGAAGALRQKDPEVTRTRNLKAIFYSLGRRDGVEARTQSEVLQWLAGRGFPVSHYSETFRGYVAAADYHRRMTEARSNFEFDADGTVIKLDPLALQEEAGFTSRAPRWAIAFKFPVEQVETVLESITVNVGRTGKLAPLAHLAPRLIEGSTVSKATLHNEDYIRQMDLRVGDTVVVRKSGGVIPQIMRVVTEKRPEKTTPFVFPTYCPECGHEVTRAEGDANTYCPNPACPAQRFERIRYFVSRGAMDVRGIGEKLVIQVIETGLVRDAADLYLLTAEQLAGLERGGEKKAQNVLAQLEASKTRPLWRLINALGMTHVGERNAQALARAFGSLDALLRATPEQIEAVPGMGKVTAVSVSAALADPTMRNLIERLRAAGMSPEETQTVRGEQLAGLNFVITGSLSQPRDELKALLEAAGARVTGSVTRKTSYLIAGQDAGSKLDRARELAVPVLDEAALGTLLHQRGVQLPGVQASAASTV.

Residues 37-41 (DDEYD), 86-87 (SL), and Glu-121 contribute to the NAD(+) site. The N6-AMP-lysine intermediate role is filled by Lys-123. 4 residues coordinate NAD(+): Arg-144, Glu-179, Lys-295, and Lys-319. Zn(2+) contacts are provided by Cys-413, Cys-416, Cys-431, and Cys-436. In terms of domain architecture, BRCT spans 593-681 (VRGEQLAGLN…GVQLPGVQAS (89 aa)).

The protein belongs to the NAD-dependent DNA ligase family. LigA subfamily. Mg(2+) serves as cofactor. It depends on Mn(2+) as a cofactor.

It catalyses the reaction NAD(+) + (deoxyribonucleotide)n-3'-hydroxyl + 5'-phospho-(deoxyribonucleotide)m = (deoxyribonucleotide)n+m + AMP + beta-nicotinamide D-nucleotide.. DNA ligase that catalyzes the formation of phosphodiester linkages between 5'-phosphoryl and 3'-hydroxyl groups in double-stranded DNA using NAD as a coenzyme and as the energy source for the reaction. It is essential for DNA replication and repair of damaged DNA. The polypeptide is DNA ligase 2 (Deinococcus deserti (strain DSM 17065 / CIP 109153 / LMG 22923 / VCD115)).